Reading from the N-terminus, the 102-residue chain is Small ribosomal subunit protein uS10 (102 aa).

Belongs to the universal ribosomal protein uS10 family. Part of the 30S ribosomal subunit.

Functionally, involved in the binding of tRNA to the ribosomes. In Streptococcus pneumoniae (strain Taiwan19F-14), this protein is Small ribosomal subunit protein uS10.